Reading from the N-terminus, the 138-residue chain is Small ribosomal subunit protein uS11c (138 aa).

Positions 1–22 are disordered; it reads MAKLLPRIGSRKNGRISSRKNA. The span at 9-22 shows a compositional bias: basic residues; it reads GSRKNGRISSRKNA.

The protein belongs to the universal ribosomal protein uS11 family. In terms of assembly, part of the 30S ribosomal subunit.

It localises to the plastid. The protein localises to the chloroplast. The polypeptide is Small ribosomal subunit protein uS11c (Populus alba (White poplar)).